The sequence spans 189 residues: Potassium-transporting ATPase KdpC subunit (189 aa).

The helical transmembrane segment at 8–28 threads the bilayer; that stretch reads LVMLILLTLITGIAYPLLTTG.

It belongs to the KdpC family. In terms of assembly, the system is composed of three essential subunits: KdpA, KdpB and KdpC.

It localises to the cell inner membrane. Its function is as follows. Part of the high-affinity ATP-driven potassium transport (or Kdp) system, which catalyzes the hydrolysis of ATP coupled with the electrogenic transport of potassium into the cytoplasm. This subunit acts as a catalytic chaperone that increases the ATP-binding affinity of the ATP-hydrolyzing subunit KdpB by the formation of a transient KdpB/KdpC/ATP ternary complex. This is Potassium-transporting ATPase KdpC subunit from Serratia proteamaculans (strain 568).